The chain runs to 332 residues: Glycerol-3-phosphate dehydrogenase [NAD(P)+] (332 aa).

Residues Trp-11, Arg-30, and Lys-108 each coordinate NADPH. Positions 108, 137, and 139 each coordinate sn-glycerol 3-phosphate. Ala-141 is an NADPH binding site. Residues Lys-192, Asp-245, Ser-255, Arg-256, and Asn-257 each coordinate sn-glycerol 3-phosphate. Catalysis depends on Lys-192, which acts as the Proton acceptor. Arg-256 serves as a coordination point for NADPH. Val-280 and Glu-282 together coordinate NADPH.

The protein belongs to the NAD-dependent glycerol-3-phosphate dehydrogenase family.

The protein localises to the cytoplasm. It carries out the reaction sn-glycerol 3-phosphate + NAD(+) = dihydroxyacetone phosphate + NADH + H(+). The enzyme catalyses sn-glycerol 3-phosphate + NADP(+) = dihydroxyacetone phosphate + NADPH + H(+). It participates in membrane lipid metabolism; glycerophospholipid metabolism. Its function is as follows. Catalyzes the reduction of the glycolytic intermediate dihydroxyacetone phosphate (DHAP) to sn-glycerol 3-phosphate (G3P), the key precursor for phospholipid synthesis. The chain is Glycerol-3-phosphate dehydrogenase [NAD(P)+] from Burkholderia pseudomallei (strain 1710b).